Here is a 397-residue protein sequence, read N- to C-terminus: Acetate kinase (397 aa).

Position 9 (Asn9) interacts with Mg(2+). Lys16 contacts ATP. Arg87 provides a ligand contact to substrate. Asp144 serves as the catalytic Proton donor/acceptor. Residues 204–208 (HLGNG), 279–281 (DCR), and 327–331 (GIGEN) each bind ATP. Glu381 is a Mg(2+) binding site.

The protein belongs to the acetokinase family. In terms of assembly, homodimer. Mg(2+) is required as a cofactor. Requires Mn(2+) as cofactor.

It localises to the cytoplasm. The catalysed reaction is acetate + ATP = acetyl phosphate + ADP. Its pathway is metabolic intermediate biosynthesis; acetyl-CoA biosynthesis; acetyl-CoA from acetate: step 1/2. Catalyzes the formation of acetyl phosphate from acetate and ATP. Can also catalyze the reverse reaction. This is Acetate kinase from Chromobacterium violaceum (strain ATCC 12472 / DSM 30191 / JCM 1249 / CCUG 213 / NBRC 12614 / NCIMB 9131 / NCTC 9757 / MK).